The sequence spans 521 residues: MASTRPSSTATKTKAPDDLVAPVVKKPHIYYGSLEEKERERLAKGESGLLGKEGLKAGIEAGNINITSGEVFEIEEHISERQAEVLAEFERRKRARQINVSTDDSEVKACLRALGEPITLFGEGPAERRERLRNILSVVGTDALKKTKKDDEKSKKSKEEYQQTWYHEGPHSLKVARLWIANYSLPRAMKRLEEARLHKEIPETTRTSQMQELHKSLRSLNNFCSQIGDDRPISYCHFSPNSKMLATACWSGLCKLWSVPDCNLLHTLRGHNTNVGAIVFHPKSTVSLDQKDVNLASCAADGSVKLWSLDSDEPVADIEGHTVRVARVTWHPSGRFLGTTCYDRSWRLWDLEAQEEILHQEGHSMGVYDIAFHQDGSLAGTGGLDAFGRVWDLRTGRCIMFLEGHLKEIYGINFSPNGYHIATGSGDNTCKVWDLRQRRCVYTIPAHQNLVTGVKFEPIHGNFLLTGAYDNTAKIWTHPGWSPLKTLAGHEGKVMGLDISSDGQLIATCSYDRTFKLWMAE.

Lysine 26 is subject to N6-acetyllysine. 7 WD repeats span residues 229–268 (DDRP…LHTL), 271–318 (HNTN…VADI), 321–360 (HTVR…ILHQ), 363–402 (HSMG…IMFL), 405–444 (HLKE…VYTI), 447–487 (HQNL…LKTL), and 490–521 (HEGK…WMAE).

Component of the precatalytic spliceosome (spliceosome B complex). Component of the U4/U6-U5 tri-snRNP complex, a building block of the precatalytic spliceosome (spliceosome B complex). The U4/U6-U5 tri-snRNP complex is composed of the U4, U6 and U5 snRNAs and at least PRPF3, PRPF4, PRPF6, PRPF8, PRPF31, SNRNP200, TXNL4A, SNRNP40, SNRPB, SNRPD1, SNRPD2, SNRPD3, SNRPE, SNRPF, SNRPG, DDX23, CD2BP2, PPIH, SNU13, EFTUD2, SART1 and USP39, plus LSM2, LSM3, LSM4, LSM5, LSM6, LSM7 and LSM8. Interacts directly with PRPF18, PPIH and PRPF3. Part of a heteromeric complex containing PPIH, PRPF3 and PRPF4 that is stable in the absence of RNA. Interacts with ERCC6.

The protein localises to the nucleus. It localises to the nucleus speckle. In terms of biological role, plays a role in pre-mRNA splicing as component of the U4/U6-U5 tri-snRNP complex that is involved in spliceosome assembly, and as component of the precatalytic spliceosome (spliceosome B complex). This Bos taurus (Bovine) protein is U4/U6 small nuclear ribonucleoprotein Prp4 (PRPF4).